The sequence spans 215 residues: Riboflavin synthase (215 aa).

Lumazine-binding repeat units follow at residues 1-96 (MFTG…FGGH) and 97-193 (FVSG…YRFL). 2,4-dihydroxypteridine is bound by residues 4–6 (GII), 47–49 (CLT), 61–66 (DVMPET), 100–102 (GHV), Lys-135, 144–146 (SLT), and 158–163 (SLIPHT).

Homotrimer. Can interact with 6,7-dimethyl-8-ribityllumazine synthase, forming a lumazine synthase/riboflavin synthase complex, also designated as 'heavy riboflavin synthase complex', which consists of a trimer of riboflavin synthase enclosed within an icosahedral structure composed of 60 subunits of 6,7-dimethyl-8-ribityllumazine synthase.

It catalyses the reaction 2 6,7-dimethyl-8-(1-D-ribityl)lumazine + H(+) = 5-amino-6-(D-ribitylamino)uracil + riboflavin. The protein operates within cofactor biosynthesis; riboflavin biosynthesis; riboflavin from 2-hydroxy-3-oxobutyl phosphate and 5-amino-6-(D-ribitylamino)uracil: step 2/2. With respect to regulation, is activated by sulfite ions. In terms of biological role, catalyzes the dismutation of two molecules of 6,7-dimethyl-8-ribityllumazine, resulting in the formation of riboflavin and 5-amino-6-(D-ribitylamino)uracil. This Bacillus subtilis (strain 168) protein is Riboflavin synthase (ribE).